The chain runs to 349 residues: Hydroxymethylglutaryl-CoA synthase (349 aa).

D29 lines the (3S)-3-hydroxy-3-methylglutaryl-CoA pocket. Residue E81 is the Proton donor/acceptor of the active site. 4 residues coordinate (3S)-3-hydroxy-3-methylglutaryl-CoA: C113, S154, T202, and H235. The Acyl-thioester intermediate role is filled by C113. Residue H235 is the Proton donor/acceptor of the active site. Residue R240 coordinates CoA. Positions 244, 267, and 297 each coordinate (3S)-3-hydroxy-3-methylglutaryl-CoA.

It belongs to the thiolase-like superfamily. Archaeal HMG-CoA synthase family. In terms of assembly, interacts with acetoacetyl-CoA thiolase that catalyzes the precedent step in the pathway and with a DUF35 protein. The acetoacetyl-CoA thiolase/HMG-CoA synthase complex channels the intermediate via a fused CoA-binding site, which allows for efficient coupling of the endergonic thiolase reaction with the exergonic HMGCS reaction.

The catalysed reaction is acetoacetyl-CoA + acetyl-CoA + H2O = (3S)-3-hydroxy-3-methylglutaryl-CoA + CoA + H(+). The protein operates within metabolic intermediate biosynthesis; (R)-mevalonate biosynthesis; (R)-mevalonate from acetyl-CoA: step 2/3. Functionally, catalyzes the condensation of acetyl-CoA with acetoacetyl-CoA to form 3-hydroxy-3-methylglutaryl-CoA (HMG-CoA). Functions in the mevalonate (MVA) pathway leading to isopentenyl diphosphate (IPP), a key precursor for the biosynthesis of isoprenoid compounds that are building blocks of archaeal membrane lipids. This chain is Hydroxymethylglutaryl-CoA synthase, found in Pyrobaculum arsenaticum (strain DSM 13514 / JCM 11321 / PZ6).